Consider the following 680-residue polypeptide: Heterokaryon incompatibility protein 6, OR allele (680 aa).

Involved in the non-self-recognition during asexual growth of N.crassa. This process involves restriction of heterokaryon formation via genetic differences at 11 het loci, including mating type. The sequence is that of Heterokaryon incompatibility protein 6, OR allele (het-6) from Neurospora crassa (strain ATCC 24698 / 74-OR23-1A / CBS 708.71 / DSM 1257 / FGSC 987).